The primary structure comprises 350 residues: Inhibitor of nuclear factor kappa-B kinase-interacting protein (350 aa).

A compositionally biased stretch (basic residues) spans 1–11 (MSEVKSRKKSG). The interval 1–39 (MSEVKSRKKSGPKGAPAAEPGKRSEGGKTPVARSSGGGG) is disordered. Residues 46–62 (CLSLLSLGTCLGLAWFV) traverse the membrane as a helical segment. Asn-144 is a glycosylation site (N-linked (GlcNAc...) asparagine). A coiled-coil region spans residues 184–217 (GLVTDVISLTDSVQELENKIEKVEKNTVKNIGDL). An N-linked (GlcNAc...) asparagine glycan is attached at Asn-328.

In terms of processing, N-glycosylated. Isoform 4 is glycosylated at Asn-154. Expressed in vein endothelial cells. Isoform 4 is expressed in lung, kidney, spleen, thymus and skeletal muscle.

It is found in the endoplasmic reticulum membrane. Its function is as follows. Target of p53/TP53 with pro-apoptotic function. This is Inhibitor of nuclear factor kappa-B kinase-interacting protein (IKBIP) from Homo sapiens (Human).